The chain runs to 131 residues: MAAKTVKKTRRRKERKNVEHGAAHIKSTFNNSIVTLTDAVGNALSWSSAGALGFRGSRKSTPFAAQMAAETAAKVAMEHGLKSIEVYVKGPGSGREAAIRSLQAAGLEVTLIKDVTPIPHNGCRPPKRRRV.

Residues 1–15 are compositionally biased toward basic residues; sequence MAAKTVKKTRRRKER. The interval 1 to 23 is disordered; it reads MAAKTVKKTRRRKERKNVEHGAA.

Belongs to the universal ribosomal protein uS11 family. Part of the 30S ribosomal subunit. Interacts with proteins S7 and S18. Binds to IF-3.

In terms of biological role, located on the platform of the 30S subunit, it bridges several disparate RNA helices of the 16S rRNA. Forms part of the Shine-Dalgarno cleft in the 70S ribosome. This is Small ribosomal subunit protein uS11 from Clostridium beijerinckii (strain ATCC 51743 / NCIMB 8052) (Clostridium acetobutylicum).